The chain runs to 345 residues: Putative [LysW]-L-2-aminoadipate/[LysW]-L-glutamate phosphate reductase (345 aa).

An NADP(+)-binding site is contributed by 11–14; sequence SGFT. The interval 34–56 is disordered; that stretch reads TSRSKENKTIGHSHPNLRHSDLR. Cysteine 146 is an active-site residue. Asparagine 309 lines the NADP(+) pocket.

Belongs to the NAGSA dehydrogenase family. Type 1 subfamily. LysY sub-subfamily.

It is found in the cytoplasm. It catalyses the reaction [amino-group carrier protein]-C-terminal-N-(1-carboxy-5-oxopentan-1-yl)-L-glutamine + phosphate + NADP(+) = [amino-group carrier protein]-C-terminal-N-(1-carboxy-5-phosphooxy-5-oxopentan-1-yl)-L-glutamine + NADPH + H(+). It carries out the reaction [amino-group carrier protein]-C-terminal-gamma-(L-glutamyl-5-semialdehyde)-L-glutamate + phosphate + NADP(+) = [amino-group carrier protein]-C-terminal-gamma-(5-phospho-L-glutamyl)-L-glutamate + NADPH + H(+). Its pathway is amino-acid biosynthesis; L-lysine biosynthesis via AAA pathway; L-lysine from L-alpha-aminoadipate (Thermus route): step 3/5. It participates in amino-acid biosynthesis; L-arginine biosynthesis. Its function is as follows. Involved in both the arginine and lysine biosynthetic pathways. This is Putative [LysW]-L-2-aminoadipate/[LysW]-L-glutamate phosphate reductase from Haloarcula marismortui (strain ATCC 43049 / DSM 3752 / JCM 8966 / VKM B-1809) (Halobacterium marismortui).